The chain runs to 355 residues: Phosphate acyltransferase (355 aa).

It belongs to the PlsX family. In terms of assembly, homodimer. Probably interacts with PlsY.

The protein resides in the cytoplasm. It carries out the reaction a fatty acyl-[ACP] + phosphate = an acyl phosphate + holo-[ACP]. The protein operates within lipid metabolism; phospholipid metabolism. Catalyzes the reversible formation of acyl-phosphate (acyl-PO(4)) from acyl-[acyl-carrier-protein] (acyl-ACP). This enzyme utilizes acyl-ACP as fatty acyl donor, but not acyl-CoA. This Erythrobacter litoralis (strain HTCC2594) protein is Phosphate acyltransferase.